Here is a 157-residue protein sequence, read N- to C-terminus: Transcription elongation factor GreA (157 aa).

The interval 1 to 60 (MEKVPMTSAGFAALGEELKKRQSEDRPRIIEHIAEARSHGDLSENAEYHAAKEEQSHNEG) is disordered. The span at 16–60 (EELKKRQSEDRPRIIEHIAEARSHGDLSENAEYHAAKEEQSHNEG) shows a compositional bias: basic and acidic residues. Residues 46 to 73 (AEYHAAKEEQSHNEGRIAELEDKLARAD) adopt a coiled-coil conformation.

The protein belongs to the GreA/GreB family.

In terms of biological role, necessary for efficient RNA polymerase transcription elongation past template-encoded arresting sites. The arresting sites in DNA have the property of trapping a certain fraction of elongating RNA polymerases that pass through, resulting in locked ternary complexes. Cleavage of the nascent transcript by cleavage factors such as GreA or GreB allows the resumption of elongation from the new 3'terminus. GreA releases sequences of 2 to 3 nucleotides. This is Transcription elongation factor GreA from Bradyrhizobium diazoefficiens (strain JCM 10833 / BCRC 13528 / IAM 13628 / NBRC 14792 / USDA 110).